The sequence spans 292 residues: Probable endonuclease 4 (292 aa).

Residues His-71, His-111, Glu-148, Asp-182, His-185, His-217, Asp-230, His-232, and Glu-262 each coordinate Zn(2+).

Belongs to the AP endonuclease 2 family. It depends on Zn(2+) as a cofactor.

It carries out the reaction Endonucleolytic cleavage to 5'-phosphooligonucleotide end-products.. Functionally, endonuclease IV plays a role in DNA repair. It cleaves phosphodiester bonds at apurinic or apyrimidinic (AP) sites, generating a 3'-hydroxyl group and a 5'-terminal sugar phosphate. This Aster yellows witches'-broom phytoplasma (strain AYWB) protein is Probable endonuclease 4.